The following is a 259-amino-acid chain: Snake venom serine protease homolog rhinocerase 2 (259 aa).

Residues 1–17 (VLIRVLANLLLLQLSYA) form the signal peptide. Positions 18–23 (QESSEL) are excised as a propeptide. The Peptidase S1 domain maps to 24-250 (VIGGDECDIN…YTDWIEGIIA (227 aa)). Intrachain disulfides connect C30-C164, C51-C67, C99-C257, C143-C211, C175-C190, and C201-C226. The N-linked (GlcNAc...) asparagine glycan is linked to N252.

It belongs to the peptidase S1 family. Snake venom subfamily. Expressed by the venom gland.

It localises to the secreted. Its function is as follows. Snake venom serine protease homolog that may act in the hemostasis system of the prey. This Bitis rhinoceros (West African gaboon viper) protein is Snake venom serine protease homolog rhinocerase 2.